The following is a 294-amino-acid chain: Shikimate dehydrogenase (NADP(+)) (294 aa).

Shikimate contacts are provided by residues 14-16 (SKS) and threonine 61. Lysine 65 (proton acceptor) is an active-site residue. An NADP(+)-binding site is contributed by aspartate 77. Shikimate is bound by residues asparagine 86 and aspartate 102. NADP(+)-binding positions include 140–144 (GSGGA) and leucine 235. Tyrosine 237 contacts shikimate. Glycine 259 serves as a coordination point for NADP(+).

Belongs to the shikimate dehydrogenase family. In terms of assembly, homodimer.

The catalysed reaction is shikimate + NADP(+) = 3-dehydroshikimate + NADPH + H(+). The protein operates within metabolic intermediate biosynthesis; chorismate biosynthesis; chorismate from D-erythrose 4-phosphate and phosphoenolpyruvate: step 4/7. In terms of biological role, involved in the biosynthesis of the chorismate, which leads to the biosynthesis of aromatic amino acids. Catalyzes the reversible NADPH linked reduction of 3-dehydroshikimate (DHSA) to yield shikimate (SA). The chain is Shikimate dehydrogenase (NADP(+)) from Blochmanniella floridana.